Consider the following 350-residue polypeptide: GTPase Obg (350 aa).

One can recognise an Obg domain in the interval 1–159; sequence MKFLDQAKIY…RWIWLRLKLI (159 aa). The OBG-type G domain maps to 160–328; sequence ADVGLVGLPN…VLRLLQDRVT (169 aa). GTP-binding positions include 166–173, 191–195, 213–216, 280–283, and 309–311; these read GLPNAGKS, FTTLH, DIPG, NKID, and SGV. 2 residues coordinate Mg(2+): S173 and T193. Residues 331 to 350 are disordered; the sequence is REAARDAAPPQAAAGREETA.

It belongs to the TRAFAC class OBG-HflX-like GTPase superfamily. OBG GTPase family. In terms of assembly, monomer. Mg(2+) serves as cofactor.

Its subcellular location is the cytoplasm. Functionally, an essential GTPase which binds GTP, GDP and possibly (p)ppGpp with moderate affinity, with high nucleotide exchange rates and a fairly low GTP hydrolysis rate. Plays a role in control of the cell cycle, stress response, ribosome biogenesis and in those bacteria that undergo differentiation, in morphogenesis control. This is GTPase Obg from Gluconacetobacter diazotrophicus (strain ATCC 49037 / DSM 5601 / CCUG 37298 / CIP 103539 / LMG 7603 / PAl5).